The sequence spans 240 residues: Cysteine-rich venom protein triflin (240 aa).

The signal sequence occupies residues 1–19; that stretch reads MIAFIVLPILAAVLQQSSG. In terms of domain architecture, SCP spans 39 to 166; sequence DLHNSLRRSV…KYSYFYVCQY (128 aa). Intrachain disulfides connect Cys75–Cys153, Cys92–Cys167, Cys148–Cys164, Cys186–Cys193, Cys189–Cys198, Cys202–Cys235, Cys211–Cys229, and Cys220–Cys233. The region spanning 202–235 is the ShKT domain; the sequence is CTRENEFTNCDSLVQKSSCQDNYMKSKCPASCFC.

The protein belongs to the CRISP family. As to quaternary structure, forms a stable, non-covalent complex with SSP-2. Expressed by the venom gland.

It localises to the secreted. Functionally, blocks contraction of smooth muscle elicited by high potassium-induced depolarization. May target voltage-gated calcium channels (Cav) on smooth muscle. The sequence is that of Cysteine-rich venom protein triflin from Protobothrops flavoviridis (Habu).